A 265-amino-acid chain; its full sequence is TATA-box-binding protein (265 aa).

Residues 1 to 40 (MYNPSQAVPVSLHKNQDNQDGGQQRSHYPQISSQQSQSYL) are disordered. Residues 18–29 (NQDGGQQRSHYP) are compositionally biased toward polar residues. A run of 2 repeats spans residues 91 to 167 (LQNI…ARVV) and 181 to 258 (IQNM…YPIL).

The protein belongs to the TBP family. As to quaternary structure, belongs to the TFIID complex together with the TBP-associated factors (TAFs). Binds DNA as monomer.

Its subcellular location is the nucleus. Functionally, general transcription factor that functions at the core of the DNA-binding multiprotein factor TFIID. Binding of TFIID to the TATA box is the initial transcriptional step of the pre-initiation complex (PIC), playing a role in the activation of eukaryotic genes transcribed by RNA polymerase II. The protein is TATA-box-binding protein of Strongylocentrotus purpuratus (Purple sea urchin).